Here is a 146-residue protein sequence, read N- to C-terminus: MILSNLKPVPGARHSKKRLGRGPGSGTGKTSGKGHKGQKARSGGGVRPGFEGGQIPFFQRIPKRGFNNHTRVEYAIVNTKELNVFEDGTVVTPELLLQTKLVSKVLAGVKILADGKLEKKLTVKANKFSNSAKEAIEAAGGTIEVI.

Residues 1–53 are disordered; that stretch reads MILSNLKPVPGARHSKKRLGRGPGSGTGKTSGKGHKGQKARSGGGVRPGFEGG. Gly residues-rich tracts occupy residues 21–31 and 42–52; these read RGPGSGTGKTS and SGGGVRPGFEG.

The protein belongs to the universal ribosomal protein uL15 family. Part of the 50S ribosomal subunit.

Functionally, binds to the 23S rRNA. This chain is Large ribosomal subunit protein uL15, found in Acholeplasma laidlawii (strain PG-8A).